A 143-amino-acid chain; its full sequence is Large ribosomal subunit protein uL11 (143 aa).

This sequence belongs to the universal ribosomal protein uL11 family. In terms of assembly, part of the ribosomal stalk of the 50S ribosomal subunit. Interacts with L10 and the large rRNA to form the base of the stalk. L10 forms an elongated spine to which L12 dimers bind in a sequential fashion forming a multimeric L10(L12)X complex. One or more lysine residues are methylated.

In terms of biological role, forms part of the ribosomal stalk which helps the ribosome interact with GTP-bound translation factors. In Beutenbergia cavernae (strain ATCC BAA-8 / DSM 12333 / CCUG 43141 / JCM 11478 / NBRC 16432 / NCIMB 13614 / HKI 0122), this protein is Large ribosomal subunit protein uL11.